The following is a 218-amino-acid chain: Cytidylate kinase (218 aa).

ATP is bound at residue Gly-11–Thr-19.

It belongs to the cytidylate kinase family. Type 1 subfamily.

Its subcellular location is the cytoplasm. The catalysed reaction is CMP + ATP = CDP + ADP. The enzyme catalyses dCMP + ATP = dCDP + ADP. The polypeptide is Cytidylate kinase (Mycoplasmopsis synoviae (strain 53) (Mycoplasma synoviae)).